Consider the following 103-residue polypeptide: Small ribosomal subunit protein uS14c (103 aa).

It belongs to the universal ribosomal protein uS14 family. In terms of assembly, part of the 30S ribosomal subunit.

It is found in the plastid. Its subcellular location is the chloroplast. In terms of biological role, binds 16S rRNA, required for the assembly of 30S particles. This chain is Small ribosomal subunit protein uS14c, found in Agrostis stolonifera (Creeping bentgrass).